We begin with the raw amino-acid sequence, 459 residues long: Serine--tRNA ligase (459 aa).

Residue 254-256 coordinates L-serine; it reads TAE. Residues 285–287 and V301 contribute to the ATP site; that span reads RKE. E308 is an L-serine binding site. Residue 372–375 participates in ATP binding; the sequence is EMVS. Residue T408 participates in L-serine binding.

Belongs to the class-II aminoacyl-tRNA synthetase family. Type-1 seryl-tRNA synthetase subfamily. Homodimer. The tRNA molecule binds across the dimer.

Its subcellular location is the cytoplasm. The enzyme catalyses tRNA(Ser) + L-serine + ATP = L-seryl-tRNA(Ser) + AMP + diphosphate + H(+). The catalysed reaction is tRNA(Sec) + L-serine + ATP = L-seryl-tRNA(Sec) + AMP + diphosphate + H(+). The protein operates within aminoacyl-tRNA biosynthesis; selenocysteinyl-tRNA(Sec) biosynthesis; L-seryl-tRNA(Sec) from L-serine and tRNA(Sec): step 1/1. In terms of biological role, catalyzes the attachment of serine to tRNA(Ser). Is also able to aminoacylate tRNA(Sec) with serine, to form the misacylated tRNA L-seryl-tRNA(Sec), which will be further converted into selenocysteinyl-tRNA(Sec). This is Serine--tRNA ligase from Desulfurococcus amylolyticus (strain DSM 18924 / JCM 16383 / VKM B-2413 / 1221n) (Desulfurococcus kamchatkensis).